The primary structure comprises 317 residues: uncharacterized protein (317 aa).

This sequence to M.avium MAV169.

This is an uncharacterized protein from Mycobacterium tuberculosis (strain CDC 1551 / Oshkosh).